We begin with the raw amino-acid sequence, 137 residues long: Nucleoside diphosphate kinase (137 aa).

ATP is bound by residues Lys-10, Phe-59, Arg-87, Thr-93, Arg-104, and Asn-114. His-117 serves as the catalytic Pros-phosphohistidine intermediate.

Belongs to the NDK family. In terms of assembly, homotetramer. Requires Mg(2+) as cofactor.

The protein resides in the cytoplasm. It catalyses the reaction a 2'-deoxyribonucleoside 5'-diphosphate + ATP = a 2'-deoxyribonucleoside 5'-triphosphate + ADP. It carries out the reaction a ribonucleoside 5'-diphosphate + ATP = a ribonucleoside 5'-triphosphate + ADP. Its function is as follows. Major role in the synthesis of nucleoside triphosphates other than ATP. The ATP gamma phosphate is transferred to the NDP beta phosphate via a ping-pong mechanism, using a phosphorylated active-site intermediate. The polypeptide is Nucleoside diphosphate kinase (Streptomyces coelicolor (strain ATCC BAA-471 / A3(2) / M145)).